Here is a 665-residue protein sequence, read N- to C-terminus: Probable potassium transport system protein Kup 2 (665 aa).

A run of 13 helical transmembrane segments spans residues 13 to 33 (GLLV…LYVM), 55 to 75 (ISLI…LIAL), 98 to 118 (WLVL…TLTP), 138 to 158 (IPVP…LFLF), 167 to 187 (IIGK…GLTG), 195 to 215 (LSLL…SPAN), 217 to 237 (VGVL…ALYS), 250 to 270 (SWPY…VWIL), 295 to 315 (FFAI…LITG), 344 to 364 (IFIP…VFLF), 375 to 395 (GLAI…YLSL), 400 to 420 (ILLR…FLIS), and 428 to 448 (GGYV…IWYF).

It belongs to the HAK/KUP transporter (TC 2.A.72) family.

It is found in the cell membrane. The catalysed reaction is K(+)(in) + H(+)(in) = K(+)(out) + H(+)(out). In terms of biological role, transport of potassium into the cell. Likely operates as a K(+):H(+) symporter. This Lactobacillus johnsonii (strain CNCM I-12250 / La1 / NCC 533) protein is Probable potassium transport system protein Kup 2.